Consider the following 141-residue polypeptide: Protein E6 (141 aa).

Zinc fingers lie at residues 27–64 and 101–137; these read CRFC…CSSC and CKFC…CRHC.

The protein belongs to the papillomaviridae E6 protein family. Forms homodimers. Interacts with ubiquitin-protein ligase UBE3A/E6-AP; this interaction stimulates UBE3A ubiquitin activity. Interacts with host BAK1.

Its subcellular location is the host cytoplasm. It localises to the host nucleus. Plays a major role in the induction and maintenance of cellular transformation. E6 associates with host UBE3A/E6-AP ubiquitin-protein ligase and modulates its activity. Protects host keratinocytes from apoptosis by mediating the degradation of host BAK1. May also inhibit host immune response. The protein is Protein E6 of Human papillomavirus 15.